A 485-amino-acid chain; its full sequence is Cyclic GMP-AMP synthase-like receptor (485 aa).

ATP is bound by residues serine 70 and 82-84 (EYD). Mg(2+) contacts are provided by glutamate 82, aspartate 84, and aspartate 204. GTP contacts are provided by residues aspartate 204 and 247–254 (RLSFYEQE). Positions 271 and 274 each coordinate ATP. Mn(2+)-binding residues include isoleucine 298 and aspartate 304.

It belongs to the mab-21 family. Mg(2+) serves as cofactor. The cofactor is Mn(2+).

The enzyme catalyses GTP + ATP = 2',3'-cGAMP + 2 diphosphate. The catalysed reaction is GTP + ATP = pppGp(2'-5')A + diphosphate. It carries out the reaction pppGp(2'-5')A = 2',3'-cGAMP + diphosphate. In terms of biological role, nucleotidyltransferase that catalyzes the formation of cyclic GMP-AMP (2',3'-cGAMP) from ATP and GTP and plays a key role in innate immunity. Directly binds some unknown ligand, activating the nucleotidyltransferase activity, leading to synthesis of 2',3'-cGAMP, a second messenger that binds to and activates Sting, thereby triggering the immune response via activation of the NF-kappa-B transcription factor. The sequence is that of Cyclic GMP-AMP synthase-like receptor from Trichogramma pretiosum (Parasitoid wasp).